Reading from the N-terminus, the 348-residue chain is Protein RecA (348 aa).

64–71 (GPESSGKT) provides a ligand contact to ATP.

Belongs to the RecA family. In terms of assembly, monomer; forms higher-order oligomers. Interacts with RecU. Interacts with DprA (smf). Interacts with RecD2.

It is found in the cytoplasm. The protein localises to the nucleoid. Functionally, multifunctional protein involved in homologous recombination, DNA repair and competence. Can catalyze the hydrolysis of (d)ATP in the presence of single-stranded (ss)DNA; prefers dATP at least in vitro, catalyzes the dATP-dependent uptake of ssDNA by duplex DNA, and the dATP-dependent hybridization of homologous ssDNA (strand exchange). RecA-ATP cannot catalyze homologous DNA strand exchange; SsbA and DprA activate strand exchange by RecA-ATP. It interacts with LexA causing its activation and leading to its autocatalytic cleavage. Hydrolysis of ATP in the presence of ssDNA is partially inhibited by RecU. Required for DNA transformation; protects transforming DNA from degradation, possibly in combination with DprA. Blocks replication of both leading and lagging strand DNA in the presence of RecO and SsbA; RecD2 is able to overcome this blockage. Recruited to repair centers (RCs), foci that are the site of double-stranded DNA break(s), after RecN. Concomitant with the appearance of RecO at the RCs, RecA forms threads that extend from RCs toward the opposite cell half, possibly searching for sequence homology along the sister chromosome. The threads disappear after about 2 hours. Thread formation is absolutely dependent on RecJ or AadAB. Thread formation is also dependent on RarA. In Bacillus subtilis (strain 168), this protein is Protein RecA.